A 715-amino-acid chain; its full sequence is Methionine--tRNA ligase (715 aa).

Positions 17-27 match the 'HIGH' region motif; that stretch reads PYANGPIHLGH. Residues C148, C151, C161, and C164 each coordinate Zn(2+). The 'KMSKS' region motif lies at 359-363; it reads KMSKS. Residue K362 coordinates ATP. In terms of domain architecture, tRNA-binding spans 614 to 715; the sequence is DLSKVELRVG…KDAKPGDRLK (102 aa).

This sequence belongs to the class-I aminoacyl-tRNA synthetase family. MetG type 1 subfamily. In terms of assembly, homodimer. Zn(2+) serves as cofactor.

The protein resides in the cytoplasm. The catalysed reaction is tRNA(Met) + L-methionine + ATP = L-methionyl-tRNA(Met) + AMP + diphosphate. Functionally, is required not only for elongation of protein synthesis but also for the initiation of all mRNA translation through initiator tRNA(fMet) aminoacylation. The polypeptide is Methionine--tRNA ligase (Leptospira interrogans serogroup Icterohaemorrhagiae serovar Lai (strain 56601)).